A 930-amino-acid polypeptide reads, in one-letter code: GPI ethanolamine phosphate transferase 1 (930 aa).

Residues 1–8 lie on the Cytoplasmic side of the membrane; sequence MARLGRTG. A helical membrane pass occupies residues 9-29; that stretch reads FLTLAVVFHLIYAYSIFDIYF. Residues 30–466 lie on the Lumenal side of the membrane; sequence VSPIVSGMRP…LQTYDWLFLR (437 aa). The N-linked (GlcNAc...) asparagine glycan is linked to asparagine 148. Residues 467–487 traverse the membrane as a helical segment; that stretch reads TIVTFGYVGWIAYALTTVIHL. Topologically, residues 488–498 are cytoplasmic; sequence HVLHGASESDR. The helical transmembrane segment at 499-519 threads the bilayer; the sequence is TTASISFFSSVLVALFSVFLY. Over 520-521 the chain is Lumenal; the sequence is QG. A helical transmembrane segment spans residues 522-542; the sequence is SPWRYYLYGFFPIFFWEEVFA. Over 543–569 the chain is Cytoplasmic; that stretch reads RRKAFHAGRAGALLLPKRDLHSNKVED. The chain crosses the membrane as a helical span at residues 570–590; the sequence is IDTITYGGAFMLLTGLLYLLF. Over 591 to 611 the chain is Lumenal; it reads EDEILGTSHQPAAVSRKGSRN. A helical transmembrane segment spans residues 612 to 632; it reads IMGLQLGMVLLALIVTRSSAA. Residues 633-639 lie on the Cytoplasmic side of the membrane; sequence SLQAKQG. Residues 640-660 form a helical membrane-spanning segment; that stretch reads LPFGNQVVGWGVLIASLLLPF. Topologically, residues 661–684 are lumenal; sequence AHRLYPNSHYLHRLMIIFLTFSPT. Residues 685-705 traverse the membrane as a helical segment; that stretch reads FIILTISYEGLFYFAFCMTLV. Over 706 to 761 the chain is Cytoplasmic; that stretch reads TWVRLEHATYVYTAKPVAKQAQETIEPPKKANPGATTVVDGETYRFRTLTVSDARV. Residues 762-782 form a helical membrane-spanning segment; sequence ALFFFFLLQSAFFSTGNIASI. Topologically, residues 783 to 803 are lumenal; the sequence is SSFSLDSVYRLIPVFNPFSQG. A helical membrane pass occupies residues 804–824; it reads ALLILKLLIPFAIISANLGIL. Over 825–833 the chain is Cytoplasmic; sequence NRRLEVAPS. A helical transmembrane segment spans residues 834-854; the sequence is ALFMVVMAISDVMTLNFFYMV. Residues 855–870 are Lumenal-facing; that stretch reads RDEGSWLDIGTTISHF. Residues 871 to 891 traverse the membrane as a helical segment; that stretch reads CIASFLCTFVAGLEFLSEVFI. Residues 892 to 930 are Cytoplasmic-facing; the sequence is SGVDFGLRTDAITASVPDIVNGITSKGQKDVPNGVEDKE.

This sequence belongs to the PIGG/PIGN/PIGO family. PIGN subfamily.

The protein localises to the endoplasmic reticulum membrane. The protein operates within glycolipid biosynthesis; glycosylphosphatidylinositol-anchor biosynthesis. In terms of biological role, ethanolamine phosphate transferase involved in glycosylphosphatidylinositol-anchor biosynthesis. Transfers ethanolamine phosphate to the first alpha-1,4-linked mannose of the glycosylphosphatidylinositol precursor of GPI-anchor. This is GPI ethanolamine phosphate transferase 1 (mcd4) from Emericella nidulans (strain FGSC A4 / ATCC 38163 / CBS 112.46 / NRRL 194 / M139) (Aspergillus nidulans).